Consider the following 67-residue polypeptide: Small ribosomal subunit protein bS21 (67 aa).

Over residues 37-52 the composition is skewed to basic and acidic residues; the sequence is EKPSERKAREAAEAVR. The interval 37–67 is disordered; sequence EKPSERKAREAAEAVRRARKMERKRLEREGF.

It belongs to the bacterial ribosomal protein bS21 family.

This chain is Small ribosomal subunit protein bS21, found in Gluconacetobacter diazotrophicus (strain ATCC 49037 / DSM 5601 / CCUG 37298 / CIP 103539 / LMG 7603 / PAl5).